A 186-amino-acid chain; its full sequence is Pyridoxal 5'-phosphate synthase subunit PdxT (186 aa).

Residue 46 to 48 coordinates L-glutamine; the sequence is GES. Catalysis depends on Cys-75, which acts as the Nucleophile. L-glutamine is bound by residues Arg-101 and 128–129; that span reads IR. Active-site charge relay system residues include His-165 and Glu-167.

Belongs to the glutaminase PdxT/SNO family. In the presence of PdxS, forms a dodecamer of heterodimers. Only shows activity in the heterodimer.

The enzyme catalyses aldehydo-D-ribose 5-phosphate + D-glyceraldehyde 3-phosphate + L-glutamine = pyridoxal 5'-phosphate + L-glutamate + phosphate + 3 H2O + H(+). The catalysed reaction is L-glutamine + H2O = L-glutamate + NH4(+). Its pathway is cofactor biosynthesis; pyridoxal 5'-phosphate biosynthesis. In terms of biological role, catalyzes the hydrolysis of glutamine to glutamate and ammonia as part of the biosynthesis of pyridoxal 5'-phosphate. The resulting ammonia molecule is channeled to the active site of PdxS. The sequence is that of Pyridoxal 5'-phosphate synthase subunit PdxT from Methanocaldococcus jannaschii (strain ATCC 43067 / DSM 2661 / JAL-1 / JCM 10045 / NBRC 100440) (Methanococcus jannaschii).